A 120-amino-acid chain; its full sequence is Ribonuclease P protein component 4 (120 aa).

The Zn(2+) site is built by Cys-67, Cys-70, Cys-96, and Cys-99.

The protein belongs to the eukaryotic/archaeal RNase P protein component 4 family. In terms of assembly, consists of a catalytic RNA component and at least 4-5 protein subunits. The cofactor is Zn(2+).

Its subcellular location is the cytoplasm. The catalysed reaction is Endonucleolytic cleavage of RNA, removing 5'-extranucleotides from tRNA precursor.. Part of ribonuclease P, a protein complex that generates mature tRNA molecules by cleaving their 5'-ends. In Thermococcus sibiricus (strain DSM 12597 / MM 739), this protein is Ribonuclease P protein component 4.